The chain runs to 366 residues: NADH-quinone oxidoreductase subunit H (366 aa).

The next 8 helical transmembrane spans lie at 27–47, 99–119, 134–154, 168–188, 206–226, 268–288, 294–314, and 329–349; these read LLLI…LTFA, FLFL…WAVV, LLYI…AGWA, AAQV…VLMM, FLNW…ISGV, ILVA…PVDI, IPGM…FLWF, and LGWK…GMVM.

Belongs to the complex I subunit 1 family. In terms of assembly, NDH-1 is composed of 14 different subunits. Subunits NuoA, H, J, K, L, M, N constitute the membrane sector of the complex.

The protein localises to the cell inner membrane. The enzyme catalyses a quinone + NADH + 5 H(+)(in) = a quinol + NAD(+) + 4 H(+)(out). Functionally, NDH-1 shuttles electrons from NADH, via FMN and iron-sulfur (Fe-S) centers, to quinones in the respiratory chain. The immediate electron acceptor for the enzyme in this species is believed to be ubiquinone. Couples the redox reaction to proton translocation (for every two electrons transferred, four hydrogen ions are translocated across the cytoplasmic membrane), and thus conserves the redox energy in a proton gradient. This subunit may bind ubiquinone. The protein is NADH-quinone oxidoreductase subunit H of Nitrosomonas europaea (strain ATCC 19718 / CIP 103999 / KCTC 2705 / NBRC 14298).